A 76-amino-acid chain; its full sequence is Probable insulin-like peptide alpha-type 1 (76 aa).

A signal peptide spans Met-1 to Ser-24. Disulfide bonds link Cys-32/Cys-60, Cys-44/Cys-73, and Cys-48/Cys-74.

It belongs to the insulin family.

It is found in the secreted. This chain is Probable insulin-like peptide alpha-type 1 (ins-21), found in Caenorhabditis elegans.